The sequence spans 434 residues: Histidinol dehydrogenase (434 aa).

Positions 130, 188, and 211 each coordinate NAD(+). Substrate is bound by residues S237, Q259, and H262. Residues Q259 and H262 each coordinate Zn(2+). Active-site proton acceptor residues include E326 and H327. Residues H327, D360, E414, and H419 each coordinate substrate. Residue D360 coordinates Zn(2+). H419 lines the Zn(2+) pocket.

This sequence belongs to the histidinol dehydrogenase family. Homodimer. Zn(2+) is required as a cofactor.

It catalyses the reaction L-histidinol + 2 NAD(+) + H2O = L-histidine + 2 NADH + 3 H(+). Its pathway is amino-acid biosynthesis; L-histidine biosynthesis; L-histidine from 5-phospho-alpha-D-ribose 1-diphosphate: step 9/9. Catalyzes the sequential NAD-dependent oxidations of L-histidinol to L-histidinaldehyde and then to L-histidine. This chain is Histidinol dehydrogenase, found in Escherichia coli (strain K12).